We begin with the raw amino-acid sequence, 107 residues long: Late histone H2B.L4 (107 aa).

O-linked (GlcNAc) serine glycosylation is present at Ser94. Residue Lys102 forms a Glycyl lysine isopeptide (Lys-Gly) (interchain with G-Cter in ubiquitin) linkage.

It belongs to the histone H2B family. As to quaternary structure, the nucleosome is a histone octamer containing two molecules each of H2A, H2B, H3 and H4 assembled in one H3-H4 heterotetramer and two H2A-H2B heterodimers. The octamer wraps approximately 147 bp of DNA. In terms of processing, monoubiquitination gives a specific tag for epigenetic transcriptional activation and is also prerequisite for histone H3 'Lys-4' and 'Lys-79' methylation. GlcNAcylation at Ser-94 promotes monoubiquitination of Lys-102. It fluctuates in response to extracellular glucose, and associates with transcribed genes.

The protein resides in the nucleus. The protein localises to the chromosome. In terms of biological role, core component of nucleosome. Nucleosomes wrap and compact DNA into chromatin, limiting DNA accessibility to the cellular machineries which require DNA as a template. Histones thereby play a central role in transcription regulation, DNA repair, DNA replication and chromosomal stability. DNA accessibility is regulated via a complex set of post-translational modifications of histones, also called histone code, and nucleosome remodeling. The sequence is that of Late histone H2B.L4 from Strongylocentrotus purpuratus (Purple sea urchin).